The chain runs to 305 residues: uncharacterized protein (305 aa).

Belongs to the ADP-ribosylglycohydrolase family.

This is an uncharacterized protein from Archaeoglobus fulgidus (strain ATCC 49558 / DSM 4304 / JCM 9628 / NBRC 100126 / VC-16).